Reading from the N-terminus, the 99-residue chain is Aspartyl/glutamyl-tRNA(Asn/Gln) amidotransferase subunit C (99 aa).

Belongs to the GatC family. Heterotrimer of A, B and C subunits.

The enzyme catalyses L-glutamyl-tRNA(Gln) + L-glutamine + ATP + H2O = L-glutaminyl-tRNA(Gln) + L-glutamate + ADP + phosphate + H(+). The catalysed reaction is L-aspartyl-tRNA(Asn) + L-glutamine + ATP + H2O = L-asparaginyl-tRNA(Asn) + L-glutamate + ADP + phosphate + 2 H(+). Its function is as follows. Allows the formation of correctly charged Asn-tRNA(Asn) or Gln-tRNA(Gln) through the transamidation of misacylated Asp-tRNA(Asn) or Glu-tRNA(Gln) in organisms which lack either or both of asparaginyl-tRNA or glutaminyl-tRNA synthetases. The reaction takes place in the presence of glutamine and ATP through an activated phospho-Asp-tRNA(Asn) or phospho-Glu-tRNA(Gln). This is Aspartyl/glutamyl-tRNA(Asn/Gln) amidotransferase subunit C from Mycolicibacterium smegmatis (strain ATCC 700084 / mc(2)155) (Mycobacterium smegmatis).